The sequence spans 44 residues: Protein PsbN (44 aa).

The chain crosses the membrane as a helical span at residues 6–26; sequence FFFTIFLWCLLLSVTGYSVYV.

This sequence belongs to the PsbN family.

It localises to the plastid. The protein resides in the chloroplast thylakoid membrane. Its function is as follows. May play a role in photosystem I and II biogenesis. The protein is Protein PsbN of Oltmannsiellopsis viridis (Marine flagellate).